A 542-amino-acid polypeptide reads, in one-letter code: 1-aminocyclopropane-1-carboxylate synthase 6 (542 aa).

The segment at M1 to A28 is disordered. K379 is modified (N6-(pyridoxal phosphate)lysine).

It belongs to the class-I pyridoxal-phosphate-dependent aminotransferase family. Requires pyridoxal 5'-phosphate as cofactor. In terms of tissue distribution, expressed in leaves.

It localises to the plastid. The protein localises to the amyloplast membrane. It carries out the reaction S-adenosyl-L-methionine = 1-aminocyclopropane-1-carboxylate + S-methyl-5'-thioadenosine + H(+). It functions in the pathway alkene biosynthesis; ethylene biosynthesis via S-adenosyl-L-methionine; ethylene from S-adenosyl-L-methionine: step 1/2. Its function is as follows. Catalyzes the formation of 1-aminocyclopropane-1-carboxylate, a direct precursor of ethylene in higher plants. Required for the regulation of starch grain size in endosperm. This Oryza sativa subsp. japonica (Rice) protein is 1-aminocyclopropane-1-carboxylate synthase 6.